We begin with the raw amino-acid sequence, 300 residues long: Tegument protein VP22 (300 aa).

The disordered stretch occupies residues 1-148 (MTSRRSVKSC…PARGRRPAQA (148 aa)). Basic and acidic residues-rich tracts occupy residues 10-22 (CPRE…HEEL) and 50-61 (PRGEVRFLHYDE). Positions 163 to 166 (GRTK) match the Nuclear localization signal motif. An interaction with gE region spans residues 174–267 (KKLHFSTAPP…LVNPDAAQDV (94 aa)). Positions 232 to 244 (LNELLDLTTIRVT) match the Nuclear export signal motif. The segment covering 269–292 (ATAAARGRPAGRAAATARAPARSA) has biased composition (low complexity). The tract at residues 269–300 (ATAAARGRPAGRAAATARAPARSASRPRRPLE) is disordered.

Belongs to the alphaherpesvirinae VP22 tegument protein family. In terms of assembly, interacts with gE (via C-terminus); this interaction is necessary for the recruitment of VP22 to the Golgi and its packaging into virions. Interacts with gM (via C-terminus). Interacts with VP16; this interaction allows the formation of a tripartite complex composed of VP16, VP22 and UL41/VHS. Interacts with the capsid-binding protein UL16. Interacts with host CGAS. In terms of processing, highly phosphorylated in the host cell. Packaging is selective for underphosphorylated forms.

It localises to the virion tegument. Its subcellular location is the host cytoplasm. It is found in the host nucleus. The protein resides in the host Golgi apparatus. In terms of biological role, tegument protein that plays different roles during the time course of infection. Participates in both the accumulation of viral mRNAs and viral protein translation at late time of infection. Modulates the RNase activity of the virion host shutoff protein UL41 probably to ensure necessary levels of key cellular mRNAs and proteins. Plays a role in microtubule reorganization that occurs after viral infection by stabilizing microtubule network. Plays a role in the inhibition of host innate immune system by targeting the CGAS enzymatic activity which is the principal cytosolic DNA sensor that detects invading viral DNA. Acts by mediating disruption of liquid-like droplets in which CGAS is activated, thereby preventing CGAS activity. The polypeptide is Tegument protein VP22 (Homo sapiens (Human)).